Reading from the N-terminus, the 357-residue chain is Probable 3'(2'),5'-bisphosphate nucleotidase 3 (357 aa).

Asp-46 serves as the catalytic Proton acceptor. Residues Glu-71, Asp-135, and Ile-137 each coordinate Mg(2+). The active-site Proton acceptor is Thr-140. Adenosine 3',5'-bisphosphate is bound by residues Thr-140, Ser-256, Lys-259, and Arg-273. The AMP site is built by Ser-256, Lys-259, and Arg-273.

It belongs to the inositol monophosphatase superfamily. Mg(2+) is required as a cofactor.

It catalyses the reaction 3'-phosphoadenylyl sulfate + H2O = adenosine 5'-phosphosulfate + phosphate. It carries out the reaction adenosine 3',5'-bisphosphate + H2O = AMP + phosphate. The catalysed reaction is adenosine 2',5'-bisphosphate + H2O = AMP + phosphate. The enzyme catalyses 1D-myo-inositol 1,4-bisphosphate + H2O = 1D-myo-inositol 4-phosphate + phosphate. It catalyses the reaction 1D-myo-inositol 1,3,4-trisphosphate + H2O = 1D-myo-inositol 3,4-bisphosphate + phosphate. It functions in the pathway signal transduction; phosphatidylinositol signaling pathway. Its function is as follows. Phosphatase that converts adenosine 3'-phosphate 5'-phosphosulfate (PAPS) to adenosine 5'-phosphosulfate (APS) and 3'(2')-phosphoadenosine 5'-phosphate (PAP) to AMP. Is also able to hydrolyze inositol 1,4-bisphosphate and inositol 1,3,4-trisphosphate. The protein is Probable 3'(2'),5'-bisphosphate nucleotidase 3 (SAL3) of Arabidopsis thaliana (Mouse-ear cress).